A 115-amino-acid chain; its full sequence is uncharacterized protein (115 aa).

This is an uncharacterized protein from Spirochaeta aurantia.